The sequence spans 348 residues: Sex-lethal homolog (348 aa).

RRM domains lie at 110–188 and 196–276; these read TNLI…YARP and TNLY…LAEE. Residues 296–310 are compositionally biased toward gly residues; sequence GGGGGGGGGGGGGMG. The segment at 296–317 is disordered; sequence GGGGGGGGGGGGGMGGPPPPPM.

The protein resides in the nucleus. Its function is as follows. Unknown; apparently not involved in somatic sex determination. The protein is Sex-lethal homolog (SXL) of Ceratitis capitata (Mediterranean fruit fly).